The sequence spans 524 residues: Glutamyl-tRNA(Gln) amidotransferase subunit A, mitochondrial (524 aa).

Residue K76 is the Charge relay system of the active site. The interval K146–A168 is disordered. S171 (charge relay system) is an active-site residue. The Acyl-ester intermediate role is filled by S195.

Belongs to the amidase family. GatA subfamily. Subunit of the heterotrimeric GatCAB amidotransferase (AdT) complex, composed of A (QRSL1), B (GATB) and C (GATC) subunits.

It is found in the mitochondrion. It catalyses the reaction L-glutamyl-tRNA(Gln) + L-glutamine + ATP + H2O = L-glutaminyl-tRNA(Gln) + L-glutamate + ADP + phosphate + H(+). Its function is as follows. Allows the formation of correctly charged Gln-tRNA(Gln) through the transamidation of misacylated Glu-tRNA(Gln) in the mitochondria. The reaction takes place in the presence of glutamine and ATP through an activated gamma-phospho-Glu-tRNA(Gln). This chain is Glutamyl-tRNA(Gln) amidotransferase subunit A, mitochondrial, found in Ornithorhynchus anatinus (Duckbill platypus).